A 310-amino-acid polypeptide reads, in one-letter code: tRNA pseudouridine synthase B (310 aa).

Catalysis depends on D47, which acts as the Nucleophile.

Belongs to the pseudouridine synthase TruB family. Type 1 subfamily.

It catalyses the reaction uridine(55) in tRNA = pseudouridine(55) in tRNA. Responsible for synthesis of pseudouridine from uracil-55 in the psi GC loop of transfer RNAs. The polypeptide is tRNA pseudouridine synthase B (Caulobacter sp. (strain K31)).